A 264-amino-acid polypeptide reads, in one-letter code: Ribosomal RNA small subunit methyltransferase J (264 aa).

S-adenosyl-L-methionine-binding positions include 111 to 112 (RD), 127 to 128 (ER), and aspartate 180.

It belongs to the methyltransferase superfamily. RsmJ family.

Its subcellular location is the cytoplasm. The enzyme catalyses guanosine(1516) in 16S rRNA + S-adenosyl-L-methionine = N(2)-methylguanosine(1516) in 16S rRNA + S-adenosyl-L-homocysteine + H(+). Functionally, specifically methylates the guanosine in position 1516 of 16S rRNA. In Alkalilimnicola ehrlichii (strain ATCC BAA-1101 / DSM 17681 / MLHE-1), this protein is Ribosomal RNA small subunit methyltransferase J.